Consider the following 426-residue polypeptide: Histidine--tRNA ligase (426 aa).

It belongs to the class-II aminoacyl-tRNA synthetase family. As to quaternary structure, homodimer.

The protein resides in the cytoplasm. It carries out the reaction tRNA(His) + L-histidine + ATP = L-histidyl-tRNA(His) + AMP + diphosphate + H(+). The chain is Histidine--tRNA ligase from Legionella pneumophila (strain Lens).